Consider the following 700-residue polypeptide: Acyl-coenzyme A oxidase 3 (700 aa).

It belongs to the acyl-CoA oxidase family. As to quaternary structure, heteropentamer composed of five different subunits. FAD serves as cofactor.

It is found in the peroxisome. It carries out the reaction a 2,3-saturated acyl-CoA + O2 = a (2E)-enoyl-CoA + H2O2. The protein operates within lipid metabolism; peroxisomal fatty acid beta-oxidation. Functionally, oxidizes aliphatic acyl-CoA substrates of different chain lengths such as hexanoyl-CoA, decanoyl-CoA and myristoyl-CoA as well as aromatic/heterocyclic ring-substituted chromogenic substrates, such as furylpropionyl-CoA. Of the above substrates, the efficiency of the enzyme, exhibits the following order: decanoyl-CoA &gt; myristoyl-CoA &gt; hexanoyl-CoA &gt; furyl-propionyl-CoA. The sequence is that of Acyl-coenzyme A oxidase 3 (POX3) from Yarrowia lipolytica (strain CLIB 122 / E 150) (Yeast).